A 725-amino-acid polypeptide reads, in one-letter code: Aminopeptidase RNPEPL1 (725 aa).

326 to 330 (VAMEN) contributes to the substrate binding site. His353 provides a ligand contact to Zn(2+). The active-site Proton acceptor is Glu354. His357 and Glu376 together coordinate Zn(2+). A disordered region spans residues 676–699 (GLGSSTEPASEPSTELGKAEADTD). Over residues 679–690 (SSTEPASEPSTE) the composition is skewed to low complexity.

This sequence belongs to the peptidase M1 family. It depends on Zn(2+) as a cofactor. Ubiquitously expressed. Expressed at relatively higher levels in heart and skeletal muscle.

The enzyme catalyses Release of N-terminal amino acids, preferentially methionine, from peptides and arylamides.. Its activity is regulated as follows. Inhibited by calcium but not affected by chloride ions. Inhibited by amastatin and to a lower extent by bestatin. Weakly inhibited by puromycin. In terms of biological role, broad specificity aminopeptidase which preferentially hydrolyzes an N-terminal methionine, citrulline or glutamine. The polypeptide is Aminopeptidase RNPEPL1 (Homo sapiens (Human)).